Here is a 31-residue protein sequence, read N- to C-terminus: Branched-chain-amino-acid aminotransferase, mitochondrial (31 aa).

A mitochondrion-targeting transit peptide spans 1–27 (MAAAALRQIWARKFLPVPWLLCGPRRY).

The protein belongs to the class-IV pyridoxal-phosphate-dependent aminotransferase family. In terms of assembly, homodimer. It depends on pyridoxal 5'-phosphate as a cofactor.

The protein localises to the mitochondrion. It carries out the reaction L-leucine + 2-oxoglutarate = 4-methyl-2-oxopentanoate + L-glutamate. It catalyses the reaction L-isoleucine + 2-oxoglutarate = (S)-3-methyl-2-oxopentanoate + L-glutamate. The enzyme catalyses L-valine + 2-oxoglutarate = 3-methyl-2-oxobutanoate + L-glutamate. Catalyzes the first reaction in the catabolism of the essential branched chain amino acids leucine, isoleucine, and valine. May also function as a transporter of branched chain alpha-keto acids. The sequence is that of Branched-chain-amino-acid aminotransferase, mitochondrial (BCAT2) from Sus scrofa (Pig).